The primary structure comprises 748 residues: Choline O-acetyltransferase (748 aa).

Residues 1–10 are compositionally biased toward basic residues; it reads MGLRTAKKRG. The disordered stretch occupies residues 1 to 89; that stretch reads MGLRTAKKRG…EWCGAASAEA (89 aa). Residues 17–32 are compositionally biased toward basic and acidic residues; that stretch reads WKREEGGGTRGRREVR. A compositionally biased stretch (gly residues) spans 40–53; sequence GGRGDPGDVGGPAG. Composition is skewed to low complexity over residues 54–65 and 73–89; these read NPGCSPHPRAAT and HTPA…SAEA. The residue at position 125 (serine 125) is a Phosphoserine. The active-site Proton acceptor is histidine 442. A Phosphoserine modification is found at serine 473. Residues 520 to 532, serine 558, and glutamine 659 each bind CoA; that span reads GKTF…CSPD. The disordered stretch occupies residues 727–748; sequence PTESKPLATKEKATRPSQGHQP.

The protein belongs to the carnitine/choline acetyltransferase family.

It carries out the reaction choline + acetyl-CoA = acetylcholine + CoA. Catalyzes the reversible synthesis of acetylcholine (ACh) from acetyl CoA and choline at cholinergic synapses. The sequence is that of Choline O-acetyltransferase (CHAT) from Homo sapiens (Human).